The sequence spans 95 residues: Large ribosomal subunit protein bL25 (95 aa).

Belongs to the bacterial ribosomal protein bL25 family. In terms of assembly, part of the 50S ribosomal subunit; part of the 5S rRNA/L5/L18/L25 subcomplex. Contacts the 5S rRNA. Binds to the 5S rRNA independently of L5 and L18.

Its function is as follows. This is one of the proteins that binds to the 5S RNA in the ribosome where it forms part of the central protuberance. This Shewanella loihica (strain ATCC BAA-1088 / PV-4) protein is Large ribosomal subunit protein bL25.